The following is a 529-amino-acid chain: Glucose-6-phosphate isomerase (529 aa).

Glutamate 322 acts as the Proton donor in catalysis. Catalysis depends on residues histidine 351 and lysine 455.

Belongs to the GPI family.

Its subcellular location is the cytoplasm. It carries out the reaction alpha-D-glucose 6-phosphate = beta-D-fructose 6-phosphate. It functions in the pathway carbohydrate biosynthesis; gluconeogenesis. It participates in carbohydrate degradation; glycolysis; D-glyceraldehyde 3-phosphate and glycerone phosphate from D-glucose: step 2/4. Catalyzes the reversible isomerization of glucose-6-phosphate to fructose-6-phosphate. This Acaryochloris marina (strain MBIC 11017) protein is Glucose-6-phosphate isomerase.